Reading from the N-terminus, the 189-residue chain is Peptidyl-tRNA hydrolase (189 aa).

Position 15 (Tyr15) interacts with tRNA. His20 functions as the Proton acceptor in the catalytic mechanism. The tRNA site is built by Phe66, Asn68, and Asn114.

This sequence belongs to the PTH family. In terms of assembly, monomer.

The protein localises to the cytoplasm. The enzyme catalyses an N-acyl-L-alpha-aminoacyl-tRNA + H2O = an N-acyl-L-amino acid + a tRNA + H(+). Its function is as follows. Hydrolyzes ribosome-free peptidyl-tRNAs (with 1 or more amino acids incorporated), which drop off the ribosome during protein synthesis, or as a result of ribosome stalling. Catalyzes the release of premature peptidyl moieties from peptidyl-tRNA molecules trapped in stalled 50S ribosomal subunits, and thus maintains levels of free tRNAs and 50S ribosomes. In Streptococcus mutans serotype c (strain ATCC 700610 / UA159), this protein is Peptidyl-tRNA hydrolase.